Here is a 60-residue protein sequence, read N- to C-terminus: Large ribosomal subunit protein bL32 (60 aa).

Residues 1-60 (MAVQQNKKSPSKRGMHRSHDFLVNPSTAIEPTTGETHLRHHISPNGFYRGRKVLKTKADE) form a disordered region. A compositionally biased stretch (polar residues) spans 24-35 (NPSTAIEPTTGE). A compositionally biased stretch (basic residues) spans 49 to 60 (RGRKVLKTKADE).

The protein belongs to the bacterial ribosomal protein bL32 family.

In Bordetella petrii (strain ATCC BAA-461 / DSM 12804 / CCUG 43448), this protein is Large ribosomal subunit protein bL32.